Reading from the N-terminus, the 387-residue chain is 3-ketoacyl-CoA thiolase (387 aa).

The active-site Acyl-thioester intermediate is cysteine 91. Active-site proton acceptor residues include histidine 343 and cysteine 373.

Belongs to the thiolase-like superfamily. Thiolase family. Heterotetramer of two alpha chains (FadB) and two beta chains (FadA).

It is found in the cytoplasm. The catalysed reaction is an acyl-CoA + acetyl-CoA = a 3-oxoacyl-CoA + CoA. It functions in the pathway lipid metabolism; fatty acid beta-oxidation. Catalyzes the final step of fatty acid oxidation in which acetyl-CoA is released and the CoA ester of a fatty acid two carbons shorter is formed. This chain is 3-ketoacyl-CoA thiolase, found in Escherichia fergusonii (strain ATCC 35469 / DSM 13698 / CCUG 18766 / IAM 14443 / JCM 21226 / LMG 7866 / NBRC 102419 / NCTC 12128 / CDC 0568-73).